Here is a 431-residue protein sequence, read N- to C-terminus: Cyclic GMP-AMP synthase-like receptor (431 aa).

Residues Ser73 and 85 to 87 (EFD) each bind ATP. Mg(2+)-binding residues include Glu85, Asp87, and Asp212. Residue Asp212 coordinates GTP. Residues Lys290 and 304–308 (SYALK) each bind ATP. Mn(2+) is bound at residue Glu316.

The protein belongs to the mab-21 family. It depends on Mg(2+) as a cofactor. Mn(2+) serves as cofactor.

The catalysed reaction is GTP + ATP = 2',3'-cGAMP + 2 diphosphate. It catalyses the reaction GTP + ATP = pppGp(2'-5')A + diphosphate. The enzyme catalyses pppGp(2'-5')A = 2',3'-cGAMP + diphosphate. Functionally, nucleotidyltransferase that catalyzes the formation of cyclic GMP-AMP (2',3'-cGAMP) from ATP and GTP and plays a key role in innate immunity. Acts as a key sensor of double-stranded RNA (dsRNA), the presence of dsRNA in the cytoplasm being a danger signal that triggers the immune responses. Directly binds dsRNA, activating the nucleotidyltransferase activity, leading to synthesis of 2',3'-cGAMP, a second messenger that binds to and activates Sting, thereby triggering the immune response via activation of the NF-kappa-B transcription factor. The protein is Cyclic GMP-AMP synthase-like receptor of Frankliniella occidentalis (Western flower thrips).